A 134-amino-acid chain; its full sequence is ATP synthase epsilon chain (134 aa).

Belongs to the ATPase epsilon chain family. As to quaternary structure, F-type ATPases have 2 components, CF(1) - the catalytic core - and CF(0) - the membrane proton channel. CF(1) has five subunits: alpha(3), beta(3), gamma(1), delta(1), epsilon(1). CF(0) has three main subunits: a, b and c.

Its subcellular location is the cell membrane. In terms of biological role, produces ATP from ADP in the presence of a proton gradient across the membrane. This Listeria innocua serovar 6a (strain ATCC BAA-680 / CLIP 11262) protein is ATP synthase epsilon chain.